We begin with the raw amino-acid sequence, 90 residues long: Large ribosomal subunit protein eL34 (90 aa).

A disordered region spans residues 38 to 65 (ARCGRPLGGVPRGRPPRVRRLSKTAKRP). Basic residues predominate over residues 51-62 (RPPRVRRLSKTA).

Belongs to the eukaryotic ribosomal protein eL34 family.

The sequence is that of Large ribosomal subunit protein eL34 (rpl34e) from Aeropyrum pernix (strain ATCC 700893 / DSM 11879 / JCM 9820 / NBRC 100138 / K1).